Consider the following 241-residue polypeptide: RAD9, HUS1, RAD1-interacting nuclear orphan protein 1 (241 aa).

The span at Met1 to Ala10 shows a compositional bias: basic residues. Residues Met1–Lys27 form a disordered region. Residues Ser56–Phe62 carry the RAD1-binding motif motif. Disordered regions lie at residues Ser68–Pro134 and Ile157–Asp204. Residues Gly72–Arg87 show a composition bias toward basic residues. Over residues Glu100 to Thr110 the composition is skewed to polar residues. Residues Gly129–Leu136 carry the D-box motif. The short motif at Leu177–Ser181 is the KEN box element. Residues Ser181–Lys193 show a composition bias toward polar residues.

As to quaternary structure, interacts (when phosphorylated by PLK1) with POLQ; promoting POLQ recruitment to DNA damage sites. Interacts with RAD1; interaction is direct and promotes association with the 9-1-1 (RAD9-RAD1-HUS1) complex. Interacts with RAD18. Interacts with TOPBP1. Interacts with UBE2N. In terms of processing, phosphorylated by PLK1, promoting interaction with polymerase theta (POLQ). Post-translationally, ubiquitinated and degraded by the APC/C complex upon mitotic exit.

It localises to the nucleus. Its subcellular location is the chromosome. In terms of biological role, involved in microhomology-mediated end-joining (MMEJ) DNA repair by promoting recruitment of polymerase theta (POLQ) to DNA damage sites during mitosis. MMEJ is an alternative non-homologous end-joining (NHEJ) machinery that takes place during mitosis to repair double-strand breaks in DNA that originate in S-phase. Accumulates in M-phase; following phosphorylation by PLK1, interacts with POLQ, enabling its recruitment to double-strand breaks for subsequent repair. Also involved in the DNA damage response (DDR) signaling in response to genotoxic stresses such as ionizing radiation (IR) during the S phase. Recruited to sites of DNA damage through interaction with the 9-1-1 cell-cycle checkpoint response complex and TOPBP1 in a ATR-dependent manner. Required for the progression of the G1 to S phase transition. Plays a role in the stimulation of CHEK1 phosphorylation. This is RAD9, HUS1, RAD1-interacting nuclear orphan protein 1 (RHNO1) from Bos taurus (Bovine).